We begin with the raw amino-acid sequence, 275 residues long: 2,3,4,5-tetrahydropyridine-2,6-dicarboxylate N-succinyltransferase (275 aa).

Substrate is bound by residues arginine 106 and aspartate 143.

It belongs to the transferase hexapeptide repeat family. Homotrimer.

It localises to the cytoplasm. The enzyme catalyses (S)-2,3,4,5-tetrahydrodipicolinate + succinyl-CoA + H2O = (S)-2-succinylamino-6-oxoheptanedioate + CoA. The protein operates within amino-acid biosynthesis; L-lysine biosynthesis via DAP pathway; LL-2,6-diaminopimelate from (S)-tetrahydrodipicolinate (succinylase route): step 1/3. The chain is 2,3,4,5-tetrahydropyridine-2,6-dicarboxylate N-succinyltransferase from Rickettsia bellii (strain RML369-C).